Reading from the N-terminus, the 368-residue chain is G-protein coupled receptor 183-A (368 aa).

Residues 1–27 (METTSANFTQNDSNVCTNLYNHRGWAQ) are Extracellular-facing. N-linked (GlcNAc...) asparagine glycosylation is found at Asn7 and Asn11. Residues 28–53 (YFLPAMYSLICIVGLLGNVLALHVIW) form a helical membrane-spanning segment. At 54-73 (PNLKKINSTTLYSANLVVSD) the chain is on the cytoplasmic side. The helical transmembrane segment at 74-91 (ILFSLALPLRVVYYARGF) threads the bilayer. Residues 92–101 (DWPMGEGLCK) lie on the Extracellular side of the membrane. Cys100 and Cys178 form a disulfide bridge. The chain crosses the membrane as a helical span at residues 102 to 123 (AVALLFYINMYAGVNFMTCLSV). Residues 124–145 (DRFIAVVLPLRFSRFRKVQKVR) lie on the Cytoplasmic side of the membrane. Residues 146–164 (YICGVVWVVVLMQTLPLLS) traverse the membrane as a helical segment. Topologically, residues 165-189 (MPMTNIEQSGHITCMEYPNFEKIDN) are extracellular. The helical transmembrane segment at 190-212 (LPVMLIGAVVLGFGIPVITILVC) threads the bilayer. The Cytoplasmic portion of the chain corresponds to 213–238 (YTALCLKLRHLAKSNKLTEKSGRSSK). The helical transmembrane segment at 239–262 (AIGVICTVILVFVVCYSPYHVDLL) threads the bilayer. Residues 263 to 282 (QYMIKKLRYDPDCSELHKFQ) lie on the Extracellular side of the membrane. A helical transmembrane segment spans residues 283–307 (ISLHITVCFMNLNSCLDPFIYFFAC). The Cytoplasmic portion of the chain corresponds to 308–368 (KGYKKKVLKL…SSVLLNSLEQ (61 aa)).

Belongs to the G-protein coupled receptor 1 family.

Its subcellular location is the cell membrane. Its function is as follows. G-protein coupled receptor expressed in lymphocytes that acts as a chemotactic receptor for B-cells, T-cells, splenic dendritic cells, monocytes/macrophages and astrocytes. Receptor for oxysterol 7-alpha,25-dihydroxycholesterol (7-alpha,25-OHC) and other related oxysterols. Mediates cell positioning and movement of a number of cells by binding the 7-alpha,25-OHC ligand that forms a chemotactic gradient. Binding of 7-alpha,25-OHC mediates the correct localization of B-cells during humoral immune responses. The sequence is that of G-protein coupled receptor 183-A (gpr183a) from Danio rerio (Zebrafish).